We begin with the raw amino-acid sequence, 177 residues long: Peptidyl-tRNA hydrolase (177 aa).

Tyr18 is a tRNA binding site. The Proton acceptor role is filled by His23. Positions 65, 67, and 113 each coordinate tRNA.

The protein belongs to the PTH family. As to quaternary structure, monomer.

Its subcellular location is the cytoplasm. The enzyme catalyses an N-acyl-L-alpha-aminoacyl-tRNA + H2O = an N-acyl-L-amino acid + a tRNA + H(+). In terms of biological role, hydrolyzes ribosome-free peptidyl-tRNAs (with 1 or more amino acids incorporated), which drop off the ribosome during protein synthesis, or as a result of ribosome stalling. Catalyzes the release of premature peptidyl moieties from peptidyl-tRNA molecules trapped in stalled 50S ribosomal subunits, and thus maintains levels of free tRNAs and 50S ribosomes. The protein is Peptidyl-tRNA hydrolase of Corynebacterium efficiens (strain DSM 44549 / YS-314 / AJ 12310 / JCM 11189 / NBRC 100395).